The primary structure comprises 858 residues: DNA mismatch repair protein MutS (858 aa).

Position 600-607 (600-607) interacts with ATP; the sequence is GPNMSGKS. Residues 803-823 form a disordered region; the sequence is EAASDEVDDNNSENSPMTDAE.

Belongs to the DNA mismatch repair MutS family.

Functionally, this protein is involved in the repair of mismatches in DNA. It is possible that it carries out the mismatch recognition step. This protein has a weak ATPase activity. In Lactobacillus helveticus (strain DPC 4571), this protein is DNA mismatch repair protein MutS.